The following is a 145-amino-acid chain: MSQKAIKGYINLIIPAAGATPAPPIGPALGQRKVNIAAFCKDFNDATQGMEKGIPLPTVITVYEDSSFSFKIKTPPASYFLKKYAKITKGSSATKKEAVVGKVTMDDCREIAKLKMPDLNTKNIEAATKIICGSAASMGLEVVGN.

It belongs to the universal ribosomal protein uL11 family. In terms of assembly, part of the ribosomal stalk of the 50S ribosomal subunit. Interacts with L10 and the large rRNA to form the base of the stalk. L10 forms an elongated spine to which L12 dimers bind in a sequential fashion forming a multimeric L10(L12)X complex. In terms of processing, one or more lysine residues are methylated.

Its function is as follows. Forms part of the ribosomal stalk which helps the ribosome interact with GTP-bound translation factors. The sequence is that of Large ribosomal subunit protein uL11 from Rickettsia africae (strain ESF-5).